Reading from the N-terminus, the 64-residue chain is SPbeta prophage-derived uncharacterized protein YonP (64 aa).

The sequence is that of SPbeta prophage-derived uncharacterized protein YonP (yonP) from Bacillus subtilis (strain 168).